The following is a 428-amino-acid chain: uncharacterized protein (428 aa).

The segment at methionine 1–glutamine 49 is disordered. The span at serine 24–glutamine 49 shows a compositional bias: polar residues.

This is an uncharacterized protein from Caenorhabditis elegans.